Consider the following 514-residue polypeptide: Photosystem II CP47 reaction center protein (514 aa).

A run of 6 helical transmembrane segments spans residues 21–36, 109–123, 148–164, 211–226, 245–260, and 465–480; these read AVHL…WAGS, IVLS…VWHW, GGHL…FGTF, IAAG…FHLT, ALAS…AFVV, and CFAL…HGAR.

Belongs to the PsbB/PsbC family. PsbB subfamily. PSII is composed of 1 copy each of membrane proteins PsbA, PsbB, PsbC, PsbD, PsbE, PsbF, PsbH, PsbI, PsbJ, PsbK, PsbL, PsbM, PsbT, PsbX, PsbY, PsbZ, Psb30/Ycf12, peripheral proteins PsbO, CyanoQ (PsbQ), PsbU, PsbV and a large number of cofactors. It forms dimeric complexes. Requires Binds multiple chlorophylls. PSII binds additional chlorophylls, carotenoids and specific lipids. as cofactor.

It is found in the cellular thylakoid membrane. Its function is as follows. One of the components of the core complex of photosystem II (PSII). It binds chlorophyll and helps catalyze the primary light-induced photochemical processes of PSII. PSII is a light-driven water:plastoquinone oxidoreductase, using light energy to abstract electrons from H(2)O, generating O(2) and a proton gradient subsequently used for ATP formation. The sequence is that of Photosystem II CP47 reaction center protein from Prochlorothrix hollandica.